The chain runs to 219 residues: MKDNDIKRLLYTHLLCIFSIILSVFIPSLFLENFSILETHLTWLCICSGFVTAVNLVLYLVVKPNTSSKRSSLSHKVTGFLKCCIYFLMSCFSFHVIFVLYGAPLIELALETFLFAVILSTFTTVPCLCLLGPNLKAWLRVFSRNGVTSIWENSLQITTISSFVGAWLGALPIPLDWERPWQVWPISCTLGATFGYVAGLVISPLWIYWNRKQLTYKNN.

A run of 6 helical transmembrane segments spans residues 11–31 (YTHLLCIFSIILSVFIPSLFL), 42–62 (TWLCICSGFVTAVNLVLYLVV), 86–106 (YFLMSCFSFHVIFVLYGAPLI), 113–133 (FLFAVILSTFTTVPCLCLLGP), 155–175 (LQITTISSFVGAWLGALPIPL), and 189–209 (TLGATFGYVAGLVISPLWIYW).

It belongs to the PIGF family. Part of the ethanolamine phosphate transferase 3 complex composed by PIGO and PIGF. Part of the ethanolamine phosphate transferase 2 complex with PIGG. PIGF is required to stabilize PIGG and PIGO.

It localises to the endoplasmic reticulum membrane. It participates in glycolipid biosynthesis; glycosylphosphatidylinositol-anchor biosynthesis. Functionally, stabilizing subunit of the ethanolamine phosphate transferase 3 and ethanolamine phosphate transferase 2 complexes that sequentially transfer an ethanolamine phosphate (EtNP) from a phosphatidylethanolamine (PE) to the 6-OH position of the third alpha-1,2-linked mannose and the second alpha-1,6-linked mannose of the alpha-D-Man-(1-&gt;2)-alpha-D-Man-(1-&gt;6)-2-PEtn-alpha-D-Man-(1-&gt;4)-alpha-D-GlcN-(1-&gt;6)-(1-radyl,2-acyl-sn-glycero-3-phospho)-2-acyl-inositol (also termed H6) intermediate to generate a 6-PEtn-alpha-D-Man-(1-&gt;2)-6-PEtn-alpha-D-Man-(1-&gt;6)-2-PEtn-alpha-D-Man-(1-&gt;4)-alpha-D-GlcN-(1-&gt;6)-(1-radyl,2-acyl-sn-glycero-3-phospho)-2-acyl-inositol (also termed H8). Participates in the tenth and eleventh steps of the glycosylphosphatidylinositol-anchor biosynthesis, in association with PIGO and PIGG, respectively. The chain is GPI ethanolamine phosphate transferase, stabilizing subunit from Homo sapiens (Human).